A 348-amino-acid polypeptide reads, in one-letter code: Keratocan (348 aa).

The N-terminal stretch at 1–26 (MSRLNLTMEVLLVAFVAVFLTSQVHS) is a signal peptide. An LRRNT domain is found at 40–69 (ACPKECNCPPNFPNAVYCDNKGLKSIPVIP). 2 disulfides stabilise this stretch: Cys-41–Cys-47 and Cys-45–Cys-57. LRR repeat units lie at residues 70-92 (PYTW…ALRN), 93-118 (ATQL…ALRA), 119-140 (MSNL…SPLP), 141-163 (AKLE…VFSG), 165-189 (GHLT…SLKG), 190-213 (LNNL…LPPT), 215-234 (TQIF…YFKG), 235-260 (LPKV…VFNL), 262-280 (SILD…PVIS), and 281-303 (SGLE…DICP). Asn-92 is a glycosylation site (N-linked (GlcNAc...) (keratan sulfate) asparagine). N-linked (GlcNAc...) (keratan sulfate) asparagine glycosylation occurs at Asn-259. An N-linked (GlcNAc...) asparagine glycan is attached at Asn-297. Cys-302 and Cys-339 are oxidised to a cystine.

It belongs to the small leucine-rich proteoglycan (SLRP) family. SLRP class II subfamily. Glycosylated. Contains keratan sulfate chains. Expressed in eye, where it is found in the corneal epithelial layer and to a lesser extent in the stromal layer (at protein level).

It localises to the secreted. Its subcellular location is the extracellular space. The protein resides in the extracellular matrix. Functionally, may be important in developing and maintaining corneal transparency and for the structure of the stromal matrix. The polypeptide is Keratocan (Danio rerio (Zebrafish)).